Reading from the N-terminus, the 654-residue chain is Transcription factor E2-alpha (654 aa).

The 9aaTAD motif lies at 19 to 27 (LLDFSMMFP). Positions 31–103 (TNGKGRPASL…LGPGLGGKSG (73 aa)) are disordered. The span at 55–68 (SSGSWGSGDQSSSS) shows a compositional bias: low complexity. Polar residues predominate over residues 69-79 (FDPSRTFSEGT). Residues 84-94 (SHSSLSSSTFL) show a composition bias toward low complexity. Phosphoserine is present on residues Ser-134 and Ser-139. 4 disordered regions span residues 135–205 (PGPL…SAKT), 239–268 (MLGG…FGGL), 292–329 (SFSS…GSSG), and 343–385 (DHSS…YDGG). Positions 147-156 (SQYYPSYSGS) are enriched in low complexity. Residues 170-176 (PKKVRKV) carry the Nuclear localization signal motif. The segment covering 256–268 (VGSSGSSSTFGGL) has biased composition (low complexity). Positions 343–354 (DHSSNNFSSSPS) are enriched in low complexity. A Phosphothreonine modification is found at Thr-355. Ser-359 carries the phosphoserine modification. The residue at position 371 (Arg-371) is an Omega-N-methylarginine. Phosphoserine is present on Ser-379. Residues 389-425 (LQSKIEDHLDEAIHVLRSHAVGTAGDMHTLLPGHGAL) are leucine-zipper. The segment at 461-552 (NHAALPSQPG…KAEREKERRV (92 aa)) is disordered. Lys-498 is covalently cross-linked (Glycyl lysine isopeptide (Lys-Gly) (interchain with G-Cter in SUMO2)). Residues 512–523 (DHSEEEKKELKA) are compositionally biased toward basic and acidic residues. Ser-529 carries the phosphoserine modification. Position 531 is a phosphothreonine (Asp-531). A compositionally biased stretch (basic and acidic residues) spans 542 to 552 (QKAEREKERRV). Positions 549-602 (ERRVANNARERLRVRDINEAFKELGRMCQLHLNSEKPQTKLLILHQAVSVILNL) constitute a bHLH domain. Residue Lys-625 forms a Glycyl lysine isopeptide (Lys-Gly) (interchain with G-Cter in SUMO2) linkage. The interval 633-654 (PQMVLSAPHPGLSEAHNPAGHM) is disordered.

As to quaternary structure, homodimer. Heterodimer; efficient DNA binding requires dimerization with another bHLH protein. Forms a heterodimer with ASH1, TWIST1 and TWIST2. Forms a heterodimer with MYOG; heterodimerization enhances MYOG DNA-binding and transcriptional activities. Forms a heterodimer with NEUROD1; the heterodimer is inhibited in presence of ID2, but not NR0B2, to E-box element. Forms a heterodimer with TCF15; the heterodimer binds E-box element. Forms a heterodimer with ATOH8; repress transcription of TCF3 and TCF3/NEUROG3 dimer-induced transactivation of E box-dependent promoters. Component of a nuclear TAL-1 complex composed at least of CBFA2T3, LDB1, TAL1 and TCF3. Interacts with NEUROD2, PTF1A and TGFB1I1. Interacts with EP300 and UBE2I. Interacts with BHLHA9. Interacts with ASB2; the interaction is mediated by SKP2 and targets TCF3 for Notch-induced proteasomal degradation. In terms of assembly, forms a heterodimer with ATOH7; required for ATOH7 DNA-binding. Interacts with RALGAPA1 and FIGLA. Phosphorylated following NGF stimulation. Post-translationally, undergoes Notch-induced ubiquitination and subsequent proteasomal degradation which is mediated by ASB1 or ASB2, the substrate-recognition components of probable ECS E3 ubiquitin-protein ligase complexes.

It localises to the nucleus. Transcriptional regulator involved in the initiation of neuronal differentiation and mesenchymal to epithelial transition. Heterodimers between TCF3 and tissue-specific basic helix-loop-helix (bHLH) proteins play major roles in determining tissue-specific cell fate during embryogenesis, like muscle or early B-cell differentiation. Together with TCF15, required for the mesenchymal to epithelial transition. Dimers bind DNA on E-box motifs: 5'-CANNTG-3'. Binds to the kappa-E2 site in the kappa immunoglobulin gene enhancer. Binds to IEB1 and IEB2, which are short DNA sequences in the insulin gene transcription control region. In terms of biological role, facilitates ATOH7 binding to DNA at the consensus sequence 5'-CAGGTG-3', and positively regulates transcriptional activity. The chain is Transcription factor E2-alpha (TCF3) from Homo sapiens (Human).